The chain runs to 251 residues: Coproheme decarboxylase (251 aa).

Fe-coproporphyrin III contacts are provided by residues arginine 133, 147–151 (YPMSK), histidine 174, glutamine 187, and serine 225. Residue tyrosine 147 is part of the active site.

It belongs to the ChdC family. Type 1 subfamily. The cofactor is Fe-coproporphyrin III.

It carries out the reaction Fe-coproporphyrin III + 2 H2O2 + 2 H(+) = heme b + 2 CO2 + 4 H2O. It catalyses the reaction Fe-coproporphyrin III + H2O2 + H(+) = harderoheme III + CO2 + 2 H2O. The catalysed reaction is harderoheme III + H2O2 + H(+) = heme b + CO2 + 2 H2O. It functions in the pathway porphyrin-containing compound metabolism; protoheme biosynthesis. In terms of biological role, involved in coproporphyrin-dependent heme b biosynthesis. Catalyzes the decarboxylation of Fe-coproporphyrin III (coproheme) to heme b (protoheme IX), the last step of the pathway. The reaction occurs in a stepwise manner with a three-propionate intermediate. The chain is Coproheme decarboxylase from Listeria monocytogenes serotype 4b (strain CLIP80459).